A 265-amino-acid polypeptide reads, in one-letter code: Phosphatidylserine decarboxylase proenzyme (265 aa).

Catalysis depends on charge relay system; for autoendoproteolytic cleavage activity residues D86, H142, and S226. The active-site Schiff-base intermediate with substrate; via pyruvic acid; for decarboxylase activity is S226. The residue at position 226 (S226) is a Pyruvic acid (Ser); by autocatalysis.

Belongs to the phosphatidylserine decarboxylase family. PSD-B subfamily. Prokaryotic type I sub-subfamily. As to quaternary structure, heterodimer of a large membrane-associated beta subunit and a small pyruvoyl-containing alpha subunit. The cofactor is pyruvate. Post-translationally, is synthesized initially as an inactive proenzyme. Formation of the active enzyme involves a self-maturation process in which the active site pyruvoyl group is generated from an internal serine residue via an autocatalytic post-translational modification. Two non-identical subunits are generated from the proenzyme in this reaction, and the pyruvate is formed at the N-terminus of the alpha chain, which is derived from the carboxyl end of the proenzyme. The autoendoproteolytic cleavage occurs by a canonical serine protease mechanism, in which the side chain hydroxyl group of the serine supplies its oxygen atom to form the C-terminus of the beta chain, while the remainder of the serine residue undergoes an oxidative deamination to produce ammonia and the pyruvoyl prosthetic group on the alpha chain. During this reaction, the Ser that is part of the protease active site of the proenzyme becomes the pyruvoyl prosthetic group, which constitutes an essential element of the active site of the mature decarboxylase.

The protein resides in the cell membrane. The enzyme catalyses a 1,2-diacyl-sn-glycero-3-phospho-L-serine + H(+) = a 1,2-diacyl-sn-glycero-3-phosphoethanolamine + CO2. Its pathway is phospholipid metabolism; phosphatidylethanolamine biosynthesis; phosphatidylethanolamine from CDP-diacylglycerol: step 2/2. Its function is as follows. Catalyzes the formation of phosphatidylethanolamine (PtdEtn) from phosphatidylserine (PtdSer). The sequence is that of Phosphatidylserine decarboxylase proenzyme from Anoxybacillus flavithermus (strain DSM 21510 / WK1).